The primary structure comprises 317 residues: Beta-ketoacyl-[acyl-carrier-protein] synthase III (317 aa).

Residues Cys112 and His244 contribute to the active site. Residues 245–249 form an ACP-binding region; the sequence is QANIR. The active site involves Asn274.

Belongs to the thiolase-like superfamily. FabH family. Homodimer.

It is found in the cytoplasm. The enzyme catalyses malonyl-[ACP] + acetyl-CoA + H(+) = 3-oxobutanoyl-[ACP] + CO2 + CoA. It participates in lipid metabolism; fatty acid biosynthesis. In terms of biological role, catalyzes the condensation reaction of fatty acid synthesis by the addition to an acyl acceptor of two carbons from malonyl-ACP. Catalyzes the first condensation reaction which initiates fatty acid synthesis and may therefore play a role in governing the total rate of fatty acid production. Possesses both acetoacetyl-ACP synthase and acetyl transacylase activities. Its substrate specificity determines the biosynthesis of branched-chain and/or straight-chain of fatty acids. This Rickettsia felis (strain ATCC VR-1525 / URRWXCal2) (Rickettsia azadi) protein is Beta-ketoacyl-[acyl-carrier-protein] synthase III.